The primary structure comprises 146 residues: Hemoglobin subunit beta (146 aa).

At Val-1 the chain carries N-acetylvaline. Residues 2–146 (HLTGEEKSAV…VATALAHKYH (145 aa)) enclose the Globin domain. Thr-12 carries the phosphothreonine modification. Residue Ser-44 is modified to Phosphoserine. His-63 is a heme b binding site. Lys-82 is subject to N6-acetyllysine. His-92 is a binding site for heme b. Cys-93 is modified (S-nitrosocysteine). Residue Lys-144 is modified to N6-acetyllysine.

It belongs to the globin family. Heterotetramer of two alpha chains and two beta chains. In terms of tissue distribution, red blood cells.

In terms of biological role, involved in oxygen transport from the lung to the various peripheral tissues. The polypeptide is Hemoglobin subunit beta (HBB) (Tursiops truncatus (Atlantic bottle-nosed dolphin)).